Here is a 416-residue protein sequence, read N- to C-terminus: Tyrosine--tRNA ligase (416 aa).

Tyr39 contributes to the L-tyrosine binding site. The short motif at 44 to 53 (CTASSLHVGS) is the 'HIGH' region element. L-tyrosine-binding residues include Tyr176 and Gln180. Residues 236 to 240 (KMGKT) carry the 'KMSKS' region motif. Lys239 contributes to the ATP binding site. Positions 349–415 (ISLIDLLHDI…GKKRHIKVMV (67 aa)) constitute an S4 RNA-binding domain.

Belongs to the class-I aminoacyl-tRNA synthetase family. TyrS type 1 subfamily. As to quaternary structure, homodimer.

The protein localises to the cytoplasm. The catalysed reaction is tRNA(Tyr) + L-tyrosine + ATP = L-tyrosyl-tRNA(Tyr) + AMP + diphosphate + H(+). Its function is as follows. Catalyzes the attachment of tyrosine to tRNA(Tyr) in a two-step reaction: tyrosine is first activated by ATP to form Tyr-AMP and then transferred to the acceptor end of tRNA(Tyr). The sequence is that of Tyrosine--tRNA ligase from Wolbachia sp. subsp. Brugia malayi (strain TRS).